A 137-amino-acid polypeptide reads, in one-letter code: Large ribosomal subunit protein uL16 (137 aa).

Belongs to the universal ribosomal protein uL16 family. As to quaternary structure, part of the 50S ribosomal subunit.

Binds 23S rRNA and is also seen to make contacts with the A and possibly P site tRNAs. This is Large ribosomal subunit protein uL16 from Azotobacter vinelandii (strain DJ / ATCC BAA-1303).